The chain runs to 22 residues: Brevinin-1OKc (22 aa).

Residue lysine 22 is modified to Lysine amide.

As to expression, expressed by the skin glands.

The protein resides in the secreted. In terms of biological role, antimicrobial peptide. Active against Gram-negative bacterium E.coli (MIC=6 uM) and against Gram-positive bacterium S.aureus (MIC=12.5 uM). This Nidirana okinavana (Kampira Falls frog) protein is Brevinin-1OKc.